The primary structure comprises 214 residues: Cytochrome b (214 aa).

A run of 4 helical transmembrane segments spans residues 31–51, 75–96, 111–131, and 176–196; these read FGSM…FLAF, WIMQ…YIHI, WVSG…GYVL, and FFAL…IHIL. Heme b contacts are provided by His-81 and His-95. Positions 180 and 194 each coordinate heme b. His-199 contributes to the a ubiquinone binding site.

Belongs to the cytochrome b family. In terms of assembly, the cytochrome bc1 complex contains 3 respiratory subunits (MT-CYB, CYC1 and UQCRFS1), 2 core proteins (UQCRC1 and UQCRC2) and probably 6 low-molecular weight proteins. Requires heme b as cofactor.

Its subcellular location is the mitochondrion inner membrane. Its function is as follows. Component of the ubiquinol-cytochrome c reductase complex (complex III or cytochrome b-c1 complex) that is part of the mitochondrial respiratory chain. The b-c1 complex mediates electron transfer from ubiquinol to cytochrome c. Contributes to the generation of a proton gradient across the mitochondrial membrane that is then used for ATP synthesis. This Gloydius blomhoffii (Mamushi) protein is Cytochrome b (MT-CYB).